Here is a 1234-residue protein sequence, read N- to C-terminus: DNA-directed RNA polymerase subunit beta (1234 aa).

The interval 1189-1212 (VLSSQDNDYEEPEENDEEDELNLD) is disordered. The segment covering 1195–1212 (NDYEEPEENDEEDELNLD) has biased composition (acidic residues).

Belongs to the RNA polymerase beta chain family. In terms of assembly, the RNAP catalytic core consists of 2 alpha, 1 beta, 1 beta' and 1 omega subunit. When a sigma factor is associated with the core the holoenzyme is formed, which can initiate transcription.

It catalyses the reaction RNA(n) + a ribonucleoside 5'-triphosphate = RNA(n+1) + diphosphate. Its function is as follows. DNA-dependent RNA polymerase catalyzes the transcription of DNA into RNA using the four ribonucleoside triphosphates as substrates. This is DNA-directed RNA polymerase subunit beta from Clostridium kluyveri (strain NBRC 12016).